The chain runs to 622 residues: Presenilin-A (622 aa).

Over residues 1–16 (MKENEDEINKTDEKYK) the composition is skewed to basic and acidic residues. Disordered regions lie at residues 1 to 65 (MKEN…NLEN) and 132 to 160 (VSEQNSDECGSKVDKDLDEDDDDDDDETE). The Cytoplasmic segment spans residues 1–168 (MKENEDEINK…TEVPELVDYS (168 aa)). A compositionally biased stretch (low complexity) spans 21–62 (SNNGNNKNKNNNNNNNNNNNNNNNNNNNNNNNNNNNNNGNSN). Residues 147-160 (DLDEDDDDDDDETE) are compositionally biased toward acidic residues. Residues 169-189 (EMIVSILYPVCITMVIVVLAI) form a helical membrane-spanning segment. Residues 190–227 (RAISSSTSKNSQIVEISNDNSGGNGDSSSGADKMVFDS) are Lumenal-facing. The helical transmembrane segment at 228-248 (VVNSLIFLAVIILSTTIMVVL) threads the bilayer. Over 249–265 (YKFKLMKALYAWLMGTS) the chain is Cytoplasmic. A helical membrane pass occupies residues 266–286 (ILLLGVFGGFLFLILLAYLNL). At 287–289 (GLD) the chain is on the lumenal side. A helical transmembrane segment spans residues 290-310 (YVTFVIVVWNFSVGGIVCIFW). Position 311 (Y311) is a topological domain, cytoplasmic. The helical transmembrane segment at 312 to 332 (SPKLLNQGYLISISVLMALFF) threads the bilayer. Over 333 to 341 (SRLPDWTTW) the chain is Lumenal. A helical transmembrane segment spans residues 342-362 (GILSIVSIYDIFAVLCPGGPL). The active site involves D351. Residues 363–538 (RILIETAQKR…SYVKPKQSIR (176 aa)) lie on the Cytoplasmic side of the membrane. Residues 419–477 (NNNNNEDENKNNTEDGNNNNNKNKNNNNNNNNRIENENGAENSSENGSITPPPTIPNFI) form a disordered region. Positions 432-466 (EDGNNNNNKNKNNNNNNNNRIENENGAENSSENGS) are enriched in low complexity. The helical transmembrane segment at 539 to 559 (LGLGDFVFYSVLIGKAASYQI) threads the bilayer. D543 is a catalytic residue. Residues 560-562 (TTV) lie on the Lumenal side of the membrane. Residues 563–583 (FTVFIAIITGLFLTLILLAVF) form a helical membrane-spanning segment. Residues 584–588 (RRALP) lie on the Cytoplasmic side of the membrane. Positions 588–590 (PAL) match the PAL motif. The helical intramembrane region spans 589–609 (ALPMSIIFGIIVFFLTFKILI). Residues 610 to 622 (QYIYFLGENQIFV) are Cytoplasmic-facing.

Belongs to the peptidase A22A family. As to quaternary structure, homodimer. Component of the gamma-secretase complex, a complex composed of a presenilin homodimer, nicastrin, aph1 and pen2.

Its subcellular location is the endoplasmic reticulum membrane. The protein localises to the golgi apparatus membrane. Functionally, probable catalytic subunit of the gamma-secretase complex, an endoprotease complex that catalyzes the intramembrane cleavage of integral membrane proteins such as Notch receptors. Requires the other members of the gamma-secretase complex to have a protease activity. The chain is Presenilin-A (psenA) from Dictyostelium discoideum (Social amoeba).